We begin with the raw amino-acid sequence, 417 residues long: Echinulin prenyltransferase 1 (417 aa).

Dimethylallyl diphosphate contacts are provided by Arg90, Lys179, Tyr181, Lys248, Tyr250, Tyr333, Tyr398, and Tyr402.

The protein belongs to the tryptophan dimethylallyltransferase family.

It catalyses the reaction cyclo(L-tryptophyl-L-alanyl) + dimethylallyl diphosphate = preechinulin + diphosphate. It functions in the pathway secondary metabolite biosynthesis. The protein operates within alkaloid biosynthesis. Prenyltransferase; part of the gene cluster that mediates the biosynthesis of echinulin family alkaloid. The pathway begins with the biosynthesis of the cyclic dipeptide cyclo-L-Trp-L-Ala (cyclo-TA) by the NRPS echPS via condensation of L-alanine and L-tryptophan. The prenyltransferase echPT1 then catalyzes the first prenylation step, a reverse prenylation reaction at C2, to yield preechinulin. Preechinulin is the substrate of the cytochrome P450 monooxygenase echP450 that catalyzes the formation of the double bond between C10 and C11 to produce neoechulin A. The unique prenyltransferase echPT2 functions as a competitive enzyme with echP450 for preechinulin metabolization and uses preechinulin for effective regiospecific prenylations. Preechinulin is prenylated by echPT2 at C5 or C7. C7-prenylation leads to accumulation of tardioxopiperazine B without further modification by echPT2. In contrast, the C5-prenylated tardioxopiperazine A can be prenylated again by echPT2, predominantly at C7 to form echinulin or less frequently at C4 to give variecolorin L. EchPT2 also accepts neoechilunin A to produce varlecolorin G (prenylation at C5) or isoechinulin A (prenylation at C7). EchPT2 further converts isoechinulin A into dehydroechinulin. Moreover, a yet unidentified enzyme can also convert neoechilunin A into neoechilunin B by introducing a double bond between positions C14 and C17 and thus provides a further substrate to echPT2 for C5 and C7 prenylation. The sequence is that of Echinulin prenyltransferase 1 from Aspergillus ruber (Eurotium rubrum).